Here is a 128-residue protein sequence, read N- to C-terminus: MFYSIVAIFVGAGLGALLRWFLSLALNAFFPAVPLGTLASNLIGGYVIGVAAVVFTVRVGLPPEWRLFVITGFLGGLTTFSTYSVEVMTHALEGEFGWALAVAALHLTGSFALTALGMWTARAWLAVA.

Transmembrane regions (helical) follow at residues 5 to 25 (IVAI…LSLA), 35 to 55 (LGTL…AVVF), 67 to 87 (LFVI…SVEV), and 96 to 116 (FGWA…LTAL). The Na(+) site is built by G75 and T78.

It belongs to the fluoride channel Fluc/FEX (TC 1.A.43) family.

It localises to the cell inner membrane. The enzyme catalyses fluoride(in) = fluoride(out). Na(+) is not transported, but it plays an essential structural role and its presence is essential for fluoride channel function. Fluoride-specific ion channel. Important for reducing fluoride concentration in the cell, thus reducing its toxicity. This Burkholderia orbicola (strain MC0-3) protein is Fluoride-specific ion channel FluC.